Here is a 434-residue protein sequence, read N- to C-terminus: Trigger factor (434 aa).

Residues 160–245 (GDKAKINFVG…LNEVQAANLP (86 aa)) enclose the PPIase FKBP-type domain.

The protein belongs to the FKBP-type PPIase family. Tig subfamily.

It is found in the cytoplasm. It catalyses the reaction [protein]-peptidylproline (omega=180) = [protein]-peptidylproline (omega=0). Involved in protein export. Acts as a chaperone by maintaining the newly synthesized protein in an open conformation. Functions as a peptidyl-prolyl cis-trans isomerase. The polypeptide is Trigger factor (Shewanella woodyi (strain ATCC 51908 / MS32)).